Reading from the N-terminus, the 169-residue chain is Ribosome maturation factor RimM (169 aa).

A PRC barrel domain is found at 94–167; sequence ENEFYFHEII…KITIEVMEGL (74 aa).

The protein belongs to the RimM family. Binds ribosomal protein uS19.

The protein localises to the cytoplasm. An accessory protein needed during the final step in the assembly of 30S ribosomal subunit, possibly for assembly of the head region. Essential for efficient processing of 16S rRNA. May be needed both before and after RbfA during the maturation of 16S rRNA. It has affinity for free ribosomal 30S subunits but not for 70S ribosomes. The sequence is that of Ribosome maturation factor RimM from Listeria welshimeri serovar 6b (strain ATCC 35897 / DSM 20650 / CCUG 15529 / CIP 8149 / NCTC 11857 / SLCC 5334 / V8).